A 333-amino-acid chain; its full sequence is Flotillin-like protein FloA (333 aa).

The next 2 membrane-spanning stretches (helical) occupy residues 8–28 and 30–50; these read LMPIILLALALILISVVFTFI and VGLWISALAAGVNVGIFTLVG.

Belongs to the flotillin-like FloA family. As to quaternary structure, homooligomerizes.

The protein resides in the cell membrane. Its subcellular location is the membrane raft. In terms of biological role, found in functional membrane microdomains (FMM) that may be equivalent to eukaryotic membrane rafts. FMMs are highly dynamic and increase in number as cells age. Flotillins are thought to be important factors in membrane fluidity. The polypeptide is Flotillin-like protein FloA (Desulfitobacterium hafniense (strain DSM 10664 / DCB-2)).